The primary structure comprises 445 residues: Arginine/agmatine antiporter (445 aa).

At 1–12 (MSSDADAHKVGL) the chain is on the cytoplasmic side. A helical membrane pass occupies residues 13 to 24 (IPVTLMVSGNIM). Residues isoleucine 23, serine 26, and glycine 27 each contribute to the L-arginine site. A Helix-breaking GSG motif TM1 motif is present at residues 25-27 (GSG). Over 25–42 (GSGVFLLPANLASTGGIA) the chain is Periplasmic. A helical membrane pass occupies residues 43 to 61 (IYGWLVTIIGALGLSMVYA). Topologically, residues 62 to 86 (KMSFLDPSPGGSYAYARRCFGPFLG) are cytoplasmic. Residues 87–112 (YQTNVLYWLACWIGNIAMVVIGVGYL) form a helical membrane-spanning segment. L-arginine is bound by residues alanine 96, cysteine 97, and asparagine 101. At 113-124 (SYFFPILKDPLV) the chain is on the periplasmic side. A helical membrane pass occupies residues 125–142 (LTITCVVVLWIFVLLNIV). Residue glycine 143 is a topological domain, cytoplasmic. Residues 144-171 (PKMITRVQAVATVLALIPIVGIAVFGWF) traverse the membrane as a helical segment. The Periplasmic segment spans residues 172–194 (WFRGETYMAAWNVSGLGTFGAIQ). The helical transmembrane segment at 195-207 (STLNVTLWSFIGV) threads the bilayer. The L-arginine site is built by tryptophan 202 and isoleucine 205. Residues 206–210 (GVESA) carry the Helix-breaking GVESA motif TM6 motif. Residues 208–226 (ESASVAAGVVKNPKRNVPI) are Cytoplasmic-facing. A helical transmembrane segment spans residues 227-247 (ATIGGVLIAAVCYVLSTTAIM). The Periplasmic segment spans residues 248–277 (GMIPNAALRVSASPFGDAARMALGDTAGAI). The chain crosses the membrane as a helical span at residues 278–301 (VSFCAAAGCLGSLGGWTLLAGQTA). Tryptophan 293 lines the L-arginine pocket. The Cytoplasmic portion of the chain corresponds to 302 to 323 (KAAADDGLFPPIFARVNKAGTP). A helical membrane pass occupies residues 324 to 340 (VAGLIIVGILMTIFQLS). Topologically, residues 341 to 352 (SISPNATKEFGL) are periplasmic. The helical transmembrane segment at 353-370 (VSSVSVIFTLVPYLYTCA) threads the bilayer. Serine 357 is a binding site for L-arginine. Over 371 to 388 (ALLLLGHGHFGKARPAYL) the chain is Cytoplasmic. A helical membrane pass occupies residues 389-404 (AVTTIAFLYCIWAVVG). At 405–407 (SGA) the chain is on the periplasmic side. The helical transmembrane segment at 408–426 (KEVMWSFVTLMVITAMYAL) threads the bilayer. The Cytoplasmic portion of the chain corresponds to 427–445 (NYNRLHKNPYPLDAPISKD).

The protein belongs to the amino acid-polyamine-organocation (APC) superfamily. Basic amino acid/polyamine antiporter (APA) (TC 2.A.3.2) family. In terms of assembly, homodimer;each subunit has its own individual transport capacity.

Its subcellular location is the cell inner membrane. It catalyses the reaction agmatine(in) + L-arginine(out) = agmatine(out) + L-arginine(in). In terms of biological role, major component of the acid-resistance (AR) system allowing enteric pathogens to survive the acidic environment in the stomach. Exchanges extracellular arginine for its intracellular decarboxylation product agmatine (Agm) thereby expelling intracellular protons. Probably undergoes several conformational states in order to translocate the substrate across the membrane; keeps the substrate accessible to only 1 side of the membrane at a time by opening and closing 3 membrane-internal gates. The polypeptide is Arginine/agmatine antiporter (adiC) (Escherichia coli O157:H7).